Consider the following 556-residue polypeptide: Testis-specific protein 10-interacting protein (556 aa).

Over residues 1-16 (MGQDTDMLNTYQQLVR) the composition is skewed to polar residues. 4 disordered regions span residues 1-31 (MGQD…LQAP), 50-102 (GCLG…LLPR), 123-155 (LQPS…ANLP), and 179-309 (GGVS…QWRK). Positions 208-219 (GSASDKQVQLQS) are enriched in polar residues. Acidic residues predominate over residues 244 to 258 (SEEEQFSEATEEAEE). The segment covering 289–301 (QGQSQGSSPSFNN) has biased composition (polar residues). The stretch at 379-464 (RQEATRSLLQ…LQGIQHRVQA (86 aa)) forms a coiled coil. Residues 503–556 (AGKVDREGTPRKPRSHRSMGVRMEHSPQRPPRTEPTGSQPDRHYNPSLDPECSP) form a disordered region.

This is Testis-specific protein 10-interacting protein (TSGA10IP) from Homo sapiens (Human).